A 531-amino-acid chain; its full sequence is Protein RPN4 (531 aa).

The disordered stretch occupies residues 338 to 432 (RFPSPSTSAN…PSAHTSSSDG (95 aa)). The span at 341-354 (SPSTSANVPSTATT) shows a compositional bias: polar residues. Residues 362 to 375 (SSSNRSCVSNSNEN) show a composition bias toward low complexity. The Nuclear localization signal motif lies at 382 to 398 (KKPTSAVVSSNASRRKL). A compositionally biased stretch (basic residues) spans 394–407 (SRRKLINYTKKHLS). Positions 408-430 (SHSSTNSNSKPSTASPSAHTSSS) are enriched in low complexity.

As to quaternary structure, probably interacts with SEC63. Interacts with MUB1, UBR2 and RPN2. In terms of processing, ubiquitinated by UBR2 in the presence of UBC2; which leads to proteasomal degradation.

It is found in the nucleus. In terms of biological role, acts as a transcriptional activator of a number of genes encoding proteasomal subunits. Binds to a PACE (proteasome-associated control element) DNA sequence 5'-GGTGGCAAA-3'. Its expression is in turn regulated by the 26S proteasome, thereby providing a negative feedback control mechanism. Required for normal growth at low temperatures. This chain is Protein RPN4 (RPN4), found in Saccharomyces cerevisiae (strain ATCC 204508 / S288c) (Baker's yeast).